The sequence spans 418 residues: Odorant receptor 13a (418 aa).

The Cytoplasmic segment spans residues 1–38 (MFYSYPYKALSFPIQCVWLKLNGSWPLTESSRPWRSQS). A helical membrane pass occupies residues 39–59 (LLATAYIVWAWYVIASVGITI). The Extracellular portion of the chain corresponds to 60 to 70 (SYQTAFLLNNL). An N-linked (GlcNAc...) asparagine glycan is attached at Asn-69. Residues 71–91 (SDIIITTENCCTTFMGVLNFV) traverse the membrane as a helical segment. Residues 92-140 (RLIHLRLNQRKFRQLIENFSYEIWIPNSSKNNVAAECRRRMVTFSIMTS) are Cytoplasmic-facing. A helical membrane pass occupies residues 141-161 (LLACLIIMYCVLPLVEIFFGP). Topologically, residues 162 to 195 (AFDAQNKPFPYKMIFPYDAQSSWIRYVMTYIFTS) are extracellular. A helical membrane pass occupies residues 196 to 216 (YAGICVVTTLFAEDTILGFFI). The Cytoplasmic segment spans residues 217-273 (TYTCGQFHLLHQRIAGLFAGSNAELAESIQLERLKRIVEKHNNIISFAKRLEDFFNP). The chain crosses the membrane as a helical span at residues 274–294 (ILLANLMISSVLICMVGFQIV). The Extracellular segment spans residues 295 to 299 (TGKNM). The chain crosses the membrane as a helical span at residues 300–320 (FIGDYVKFIIYISSALSQLYV). Residues 321–385 (LCENGDALIK…PVRITAFKFS (65 aa)) lie on the Cytoplasmic side of the membrane. A helical membrane pass occupies residues 386–406 (TLSLQSFTAILSTSISYFTLL). Residues 407 to 418 (RSVYFDDEKKLD) lie on the Extracellular side of the membrane.

The protein belongs to the insect chemoreceptor superfamily. Heteromeric odorant receptor channel (TC 1.A.69) family. Or1a subfamily. As to quaternary structure, interacts with Orco. Complexes exist early in the endomembrane system in olfactory sensory neurons (OSNs), coupling these complexes to the conserved ciliary trafficking pathway. In terms of tissue distribution, expressed in olfactory sensory neurons in the antenna.

Its subcellular location is the cell membrane. Odorant receptor which mediates acceptance or avoidance behavior, depending on its substrates. The odorant receptor repertoire encodes a large collection of odor stimuli that vary widely in identity, intensity, and duration. May form a complex with Orco to form odorant-sensing units, providing sensitive and prolonged odorant signaling and calcium permeability. Involved in the behavioral responses to octanol, nonanol, and pentyl acetate. In Drosophila melanogaster (Fruit fly), this protein is Odorant receptor 13a (Or13a).